A 304-amino-acid polypeptide reads, in one-letter code: Acetylglutamate kinase (304 aa).

Residues 75-76, arginine 97, and asparagine 196 each bind substrate; that span reads GG.

Belongs to the acetylglutamate kinase family. ArgB subfamily.

The protein resides in the cytoplasm. The enzyme catalyses N-acetyl-L-glutamate + ATP = N-acetyl-L-glutamyl 5-phosphate + ADP. It participates in amino-acid biosynthesis; L-arginine biosynthesis; N(2)-acetyl-L-ornithine from L-glutamate: step 2/4. Catalyzes the ATP-dependent phosphorylation of N-acetyl-L-glutamate. This is Acetylglutamate kinase from Corynebacterium urealyticum (strain ATCC 43042 / DSM 7109).